Reading from the N-terminus, the 469-residue chain is ATP synthase subunit beta (469 aa).

Residue 156–163 participates in ATP binding; sequence GGAGVGKT.

It belongs to the ATPase alpha/beta chains family. F-type ATPases have 2 components, CF(1) - the catalytic core - and CF(0) - the membrane proton channel. CF(1) has five subunits: alpha(3), beta(3), gamma(1), delta(1), epsilon(1). CF(0) has three main subunits: a(1), b(2) and c(9-12). The alpha and beta chains form an alternating ring which encloses part of the gamma chain. CF(1) is attached to CF(0) by a central stalk formed by the gamma and epsilon chains, while a peripheral stalk is formed by the delta and b chains.

The protein resides in the cell membrane. The catalysed reaction is ATP + H2O + 4 H(+)(in) = ADP + phosphate + 5 H(+)(out). Produces ATP from ADP in the presence of a proton gradient across the membrane. The catalytic sites are hosted primarily by the beta subunits. The polypeptide is ATP synthase subunit beta (Bacillus mycoides (strain KBAB4) (Bacillus weihenstephanensis)).